A 580-amino-acid chain; its full sequence is Arginine--tRNA ligase (580 aa).

Residues 137 to 147 (ANPTGPLHIGH) carry the 'HIGH' region motif.

The protein belongs to the class-I aminoacyl-tRNA synthetase family. In terms of assembly, monomer.

It is found in the cytoplasm. The enzyme catalyses tRNA(Arg) + L-arginine + ATP = L-arginyl-tRNA(Arg) + AMP + diphosphate. This chain is Arginine--tRNA ligase, found in Anaplasma phagocytophilum (strain HZ).